Here is a 576-residue protein sequence, read N- to C-terminus: Low-affinity glucose transporter HXT4 (576 aa).

The segment at M1–N56 is disordered. Residues M1–S66 lie on the Cytoplasmic side of the membrane. Positions E25–N37 are enriched in polar residues. The span at K38–S54 shows a compositional bias: basic and acidic residues. A Glycyl lysine isopeptide (Lys-Gly) (interchain with G-Cter in ubiquitin) cross-link involves residue K45. A helical transmembrane segment spans residues A67 to W87. Residues D88–G122 lie on the Extracellular side of the membrane. A helical transmembrane segment spans residues L123 to G143. Residues D144–K149 lie on the Cytoplasmic side of the membrane. The chain crosses the membrane as a helical span at residues M150–I170. The Extracellular portion of the chain corresponds to N171–R180. A helical transmembrane segment spans residues I181–V201. The Cytoplasmic portion of the chain corresponds to S202–R207. Residues G208–T228 form a helical membrane-spanning segment. The Extracellular segment spans residues N229–R242. The helical transmembrane segment at V243–P263 threads the bilayer. Over E264–D346 the chain is Cytoplasmic. Residues N347–E363 form a helical membrane-spanning segment. Topologically, residues D364–S369 are extracellular. Residues I370 to V387 form a helical membrane-spanning segment. Residues E388–R394 are Cytoplasmic-facing. Residues C395–V415 traverse the membrane as a helical segment. The Extracellular portion of the chain corresponds to T416–V437. An N-linked (GlcNAc...) asparagine glycan is attached at N425. A helical transmembrane segment spans residues F438–N458. Over S459–Q475 the chain is Cytoplasmic. Residues A476–I496 form a helical membrane-spanning segment. Residue D497 is a topological domain, extracellular. The helical transmembrane segment at F498–F518 threads the bilayer. The Cytoplasmic segment spans residues V519–K576.

Belongs to the major facilitator superfamily. Sugar transporter (TC 2.A.1.1) family.

It localises to the cell membrane. With respect to regulation, xylose uptake is strongly inhibited by glucose. Low-affinity glucose transporter. Can also transport xylose. In Saccharomyces cerevisiae (strain YJM789) (Baker's yeast), this protein is Low-affinity glucose transporter HXT4 (HXT4).